A 202-amino-acid polypeptide reads, in one-letter code: Probable nicotinate-nucleotide adenylyltransferase (202 aa).

The protein belongs to the NadD family.

The enzyme catalyses nicotinate beta-D-ribonucleotide + ATP + H(+) = deamido-NAD(+) + diphosphate. It functions in the pathway cofactor biosynthesis; NAD(+) biosynthesis; deamido-NAD(+) from nicotinate D-ribonucleotide: step 1/1. Catalyzes the reversible adenylation of nicotinate mononucleotide (NaMN) to nicotinic acid adenine dinucleotide (NaAD). This is Probable nicotinate-nucleotide adenylyltransferase from Clostridium perfringens (strain SM101 / Type A).